Reading from the N-terminus, the 661-residue chain is UvrABC system protein B (661 aa).

Residues 25–182 form the Helicase ATP-binding domain; the sequence is KGLNNKKRSQ…NDLVNLQYER (158 aa). 38–45 is an ATP binding site; that stretch reads GITGSGKT. Residues 91-114 carry the Beta-hairpin motif; that stretch reads YYDYYQPEAYIPKTDVFIEKDSSI. The Helicase C-terminal domain occupies 430–592; it reads QVEDLVGEIQ…IIPKTINRTI (163 aa). Residues 621-656 enclose the UVR domain; sequence KAHIDKLRKEMLKAASNLEFEQAAKLRDQLKTLEEA.

Belongs to the UvrB family. Forms a heterotetramer with UvrA during the search for lesions. Interacts with UvrC in an incision complex.

Its subcellular location is the cytoplasm. Its function is as follows. The UvrABC repair system catalyzes the recognition and processing of DNA lesions. A damage recognition complex composed of 2 UvrA and 2 UvrB subunits scans DNA for abnormalities. Upon binding of the UvrA(2)B(2) complex to a putative damaged site, the DNA wraps around one UvrB monomer. DNA wrap is dependent on ATP binding by UvrB and probably causes local melting of the DNA helix, facilitating insertion of UvrB beta-hairpin between the DNA strands. Then UvrB probes one DNA strand for the presence of a lesion. If a lesion is found the UvrA subunits dissociate and the UvrB-DNA preincision complex is formed. This complex is subsequently bound by UvrC and the second UvrB is released. If no lesion is found, the DNA wraps around the other UvrB subunit that will check the other stand for damage. The polypeptide is UvrABC system protein B (Rickettsia bellii (strain RML369-C)).